Reading from the N-terminus, the 354-residue chain is Sorbitol dehydrogenase (354 aa).

Residue Cys43 participates in Zn(2+) binding. Tyr49 is a binding site for substrate. 2 residues coordinate Zn(2+): His67 and Glu68. Glu153 is a substrate binding site. The NAD(+) site is built by Ile181, Asp201, and Arg206. Residues Ser208 and Ser222 each carry the phosphoserine modification. Residues 270 to 272 (VGL) and 294 to 296 (VFR) each bind NAD(+). Residues Arg296 and Tyr297 each coordinate substrate.

It belongs to the zinc-containing alcohol dehydrogenase family. Homotetramer. Zn(2+) serves as cofactor. As to expression, expressed in liver.

The protein resides in the mitochondrion membrane. It localises to the cell projection. The protein localises to the cilium. It is found in the flagellum. The enzyme catalyses xylitol + NAD(+) = D-xylulose + NADH + H(+). The catalysed reaction is L-iditol + NAD(+) = keto-L-sorbose + NADH + H(+). It carries out the reaction keto-D-fructose + NADH + H(+) = D-sorbitol + NAD(+). Polyol dehydrogenase that catalyzes the reversible NAD(+)-dependent oxidation of various sugar alcohols. Is mostly active with xylitol, L-iditol and D-sorbitol (D-glucitol) as substrates, leading to the C2-oxidized products D-xylulose, L-sorbose and D-fructose, respectively. Is a key enzyme in the polyol pathway that interconverts glucose and fructose via sorbitol, which constitutes an important alternate route for glucose metabolism. May play a role in sperm motility by using sorbitol as an alternative energy source for sperm motility. This is Sorbitol dehydrogenase (SORD) from Ovis aries (Sheep).